We begin with the raw amino-acid sequence, 1153 residues long: Bifunctional dioxygenase (DOX)-epoxy alcohol synthase (EAS) (1153 aa).

Residues 46–56 (SSKESPSRKSS) show a composition bias toward low complexity. The tract at residues 46 to 113 (SSKESPSRKS…TQHGDGTYPT (68 aa)) is disordered. A compositionally biased stretch (polar residues) spans 57–74 (TIGQSTRNGSCQADTQKG). The span at 81 to 98 (EKPKPVKENPMKKLKEMS) shows a compositional bias: basic and acidic residues. Residues 177-525 (TDSLINELWE…DGKFDDDDLV (349 aa)) are fatty acid alpha-dioxygenase. Residue His276 coordinates heme b. Tyr454 is an active-site residue. Position 457 (His457) interacts with heme b. Residues 732–1153 (RVNITSYGGA…VTMRVMWDDE (422 aa)) form an epoxy alcohol synthase region. Heme is bound at residue Cys1086.

This sequence in the N-terminal section; belongs to the peroxidase family. In the C-terminal section; belongs to the cytochrome P450 family. Homotetramer. It depends on heme b as a cofactor. The cofactor is heme.

It catalyses the reaction (9Z)-octadecenoate + O2 = (8R)-hydroperoxy-(9Z)-octadecenoate. The enzyme catalyses (9Z)-octadecenoate + O2 = 10-hydroperoxy-(8E)-octadecenoate. It carries out the reaction (9Z,12Z)-octadecadienoate + O2 = (8E,10R,12Z)-10-hydroperoxyoctadeca-8,12-dienoate. The catalysed reaction is (9Z,12Z,15Z)-octadecatrienoate + O2 = (10R)-hydroperoxy-(8E,12Z,15Z)-octadecatrienoate. It catalyses the reaction (9Z,12Z,15Z)-octadecatrienoate + O2 = (8R)-hydroperoxy-(9Z,12Z,15Z)-octadecatrienoate. The enzyme catalyses (11Z,14Z)-eicosadienoate + O2 = 12-hydroperoxy-(10E,14Z)-eicosadienoate. It carries out the reaction (11Z,14Z,17Z)-eicosatrienoate + O2 = 12-hydroperoxy-(10E,14Z,17Z)-eicosatrienoate. The catalysed reaction is (12R,13S)-epoxy-(9Z)-octadecenoate + O2 = (12R,13S)-epoxy-(10R)-hydroperoxy-(8E)-octadecenoate. It catalyses the reaction (8E,10R,12Z)-10-hydroperoxyoctadeca-8,12-dienoate = (12S,13R)-epoxy-(10R)-hydroxy-(8E)-octadecenoate. The enzyme catalyses (10R)-hydroperoxy-(8E,12Z,15Z)-octadecatrienoate = 12,13-epoxy-(10R)-hydroxy-(8E,15Z)-octadecadienoate. It carries out the reaction 12-hydroperoxy-(10E,14Z)-eicosadienoate = 10,11-epoxy-12-hydroxy-(14Z)-eicosenoate. The catalysed reaction is 12-hydroperoxy-(10E,14Z,17Z)-eicosatrienoate = 14,15-epoxy-12-hydroxy-(10E,17Z)-eicosadienoate. It catalyses the reaction (13R)-hydroperoxy-(9Z,11E)-octadecadienoate = (12R,13R)-epoxy-(11S)-hydroxy-(9Z)-octadecenoate. The enzyme catalyses (13S)-hydroperoxy-(9Z,11E)-octadecadienoate = (12R,13R)-epoxy-(11S)-hydroxy-(9Z)-octadecenoate. It carries out the reaction 12-hydroperoxy-(10E,14Z)-eicosadienoate = 14,15-epoxy-12-hydroxy-(10E)-eicosenoate. The catalysed reaction is 12-hydroperoxy-(10E,14Z,17Z)-eicosatrienoate = 10,11-epoxy-12-hydroxy-(14Z,17Z)-eicosadienoate. Its function is as follows. Bifunctional dioxygenase (DOX)-epoxy alcohol synthase (EAS) that converts linoleic acid (18:2n-6) sequentially to 10(R)-hydroperoxy-8(E),12(Z)-octadecadienoic acid (10R-HPODE) and 10R-HPODE further to 12 S(13R)-epoxy-10(R)-hydroxy-8(E)-octadecenoic acid as the end product. Oxygenation at C-10 occurs by retention of the pro-R hydrogen of C-8 of 18:2n-6, suggesting antarafacial hydrogen abstraction and oxygenation. The epoxy alcohol is formed from 10R-HPODE, likely by heterolytic cleavage of the dioxygen bond and subsequent intramolecular epoxidation of the 12(Z) double bond. The DOX domain is also able to oxygenate position C-8 of linoleic acid to produce 8(R)-hydroperoxy-8(E),12(Z)-octadecadienoic acid (8R-HPODE). Moreover, the DOX domain can oxygenate alpha-linolenic acid (18:3n-3) at C-8 or C-10 to produce respectively 8HOTrE and 10HOTrE, oleic acid (18:1n-9) at C-8 or C-10 to produce respectively 8-H(P)OME and 10-H(P)OME (with 8R stereoisomer to over 95%), eicosadienoic acid (20:2n-6) at C-10 or C-12 to produce respectively 10(11)-epoxy-12-hydroxy-14(Z)-eicosenoic acid and 14(15)-epoxy-12-hydroxy-10(E)-eicosenoic acid, as well as eicosatrienoic acid (20:3n-3) at C-10 or C-12 to produce respectively 10(11)-epoxy-12-hydroxy-14(Z),17(Z)-eicosadienoic acid and 14(15)-epoxy-12-hydroxy-14(Z),17(Z)-eicosadienoic acid. On the other side, the enzyme EAS domain can also catalyze the conversion of 10HOTrE into 12(13)-epoxy-10(R)-hydroxy-8(E),15(Z)-octadecadienoic acid, 13-R-HPODE into the stereoisomers of 12(13)-epoxy-11-hydroxy-9(Z)-octadecenoic acids (erythro/threo, 1:4), as well as 13S-HPODE into the stereoisomers of 12(13)-epoxy-11-hydroxy-9(Z)-octadecenoic acids (erythro/threo, 1:4) (EAS activity). Gamma-linolenic acid (18:3n-6) is not a substrate. The chain is Bifunctional dioxygenase (DOX)-epoxy alcohol synthase (EAS) from Pyricularia oryzae (strain 70-15 / ATCC MYA-4617 / FGSC 8958) (Rice blast fungus).